The chain runs to 367 residues: Probable alcohol dehydrogenase adh (367 aa).

Zn(2+)-binding residues include Cys-43, His-64, Cys-97, Cys-100, Cys-103, Cys-111, and Asn-163.

It belongs to the zinc-containing alcohol dehydrogenase family. Zn(2+) is required as a cofactor.

The catalysed reaction is a primary alcohol + NAD(+) = an aldehyde + NADH + H(+). The enzyme catalyses a secondary alcohol + NAD(+) = a ketone + NADH + H(+). The chain is Probable alcohol dehydrogenase adh (adh) from Mycobacterium tuberculosis (strain CDC 1551 / Oshkosh).